Here is a 350-residue protein sequence, read N- to C-terminus: Patr class I histocompatibility antigen, alpha chain E (350 aa).

Residues 1–21 (MVDGTLLLLLSEALALTQTWA) form the signal peptide. The tract at residues 22–111 (GSHSLKYFHT…LRGYYNQSEA (90 aa)) is alpha-1. Residues 22-305 (GSHSLKYFHT…KPASQPTIPI (284 aa)) are Extracellular-facing. N107 is a glycosylation site (N-linked (GlcNAc...) asparagine). Positions 112–203 (GSHTLQWMHG…EKGKETLLHL (92 aa)) are alpha-2. 2 disulfide bridges follow: C122/C185 and C224/C280. Residues 204 to 295 (EPPKTHVTHH…GLPEPLTLRW (92 aa)) are alpha-3. Positions 206-294 (PKTHVTHHPI…EGLPEPLTLR (89 aa)) constitute an Ig-like C1-type domain. The tract at residues 296–305 (KPASQPTIPI) is connecting peptide. A helical membrane pass occupies residues 306–329 (VGIIAGLVLLGSVVSGAVVAAVMW). The Cytoplasmic segment spans residues 330–350 (RKKSSGGKGRSYSKAEWSDSA).

This sequence belongs to the MHC class I family. In terms of assembly, heterodimer of an alpha chain and a beta chain (beta-2-microglobulin).

The protein localises to the membrane. In terms of biological role, preferably binds to a peptide derived from the signal sequence of most HLA-A, -B, -C and -G molecules. In Pan troglodytes (Chimpanzee), this protein is Patr class I histocompatibility antigen, alpha chain E (Patr-E).